A 309-amino-acid polypeptide reads, in one-letter code: Malate dehydrogenase (309 aa).

NAD(+)-binding positions include 9–14 and aspartate 33; that span reads GAGFVG. Substrate-binding residues include arginine 82 and arginine 88. NAD(+) is bound by residues asparagine 95 and 118-120; that span reads VNN. Residues asparagine 120 and arginine 151 each coordinate substrate. The Proton acceptor role is filled by histidine 175.

It belongs to the LDH/MDH superfamily. MDH type 3 family.

The enzyme catalyses (S)-malate + NAD(+) = oxaloacetate + NADH + H(+). Functionally, catalyzes the reversible oxidation of malate to oxaloacetate. The chain is Malate dehydrogenase from Chloroflexus aggregans (strain MD-66 / DSM 9485).